Here is a 129-residue protein sequence, read N- to C-terminus: MARRVTRAKKRERKNIVSGVAHIKSTFNNTIVTITDTKGNTISWSSAGQVGFKGSRKSTPFAAQMAAESAAREAMEHGLKEVEVMVKGPGAGREAAIRSLQAAGLEVNLIKDVTPIPHNGCRPPKRRRV.

This sequence belongs to the universal ribosomal protein uS11 family. Part of the 30S ribosomal subunit. Interacts with proteins S7 and S18. Binds to IF-3.

Located on the platform of the 30S subunit, it bridges several disparate RNA helices of the 16S rRNA. Forms part of the Shine-Dalgarno cleft in the 70S ribosome. The polypeptide is Small ribosomal subunit protein uS11 (Pelotomaculum thermopropionicum (strain DSM 13744 / JCM 10971 / SI)).